A 767-amino-acid polypeptide reads, in one-letter code: Cilium assembly protein DZIP1L (767 aa).

The disordered stretch occupies residues 122–144; that stretch reads QQRGQQELGRQADELKGVREESR. Residues 131 to 144 show a composition bias toward basic and acidic residues; that stretch reads RQADELKGVREESR. The segment at 166–189 adopts a C2H2-type zinc-finger fold; the sequence is HTCHLCDKTFMNATFLRGHIQRRH. Residues 205–406 adopt a coiled-coil conformation; sequence VEEVLEELRA…SQEEMIQSLS (202 aa). Ser-426 carries the post-translational modification Phosphoserine. Positions 518 to 767 are disordered; it reads SRAKERQENG…SSGQPRVPAW (250 aa). Polar residues-rich tracts occupy residues 533–547 and 574–588; these read PDGQ…STLV and RQSH…TQVS. Positions 607 to 616 are enriched in low complexity; the sequence is GPGMSTPPFS. Polar residues predominate over residues 658–675; sequence ENAQPPGQGSGTLVQSMV. Basic and acidic residues predominate over residues 677–686; that stretch reads NLEKQLEAPA.

The protein belongs to the DZIP C2H2-type zinc-finger protein family. In terms of assembly, interacts with SEPTIN2.

It localises to the cytoplasm. It is found in the cytoskeleton. Its subcellular location is the cilium basal body. The protein localises to the microtubule organizing center. The protein resides in the centrosome. It localises to the centriole. In terms of biological role, involved in primary cilium formation. Probably acts as a transition zone protein required for localization of PKD1/PC1 and PKD2/PC2 to the ciliary membrane. The chain is Cilium assembly protein DZIP1L from Homo sapiens (Human).